The following is a 339-amino-acid chain: Transposase for insertion sequence element IS1086 (339 aa).

Residues Asp-176–Leu-329 form the Integrase catalytic domain.

Belongs to the transposase IS30 family.

Functionally, required for the transposition of the insertion element. The sequence is that of Transposase for insertion sequence element IS1086 (IS1086) from Cupriavidus metallidurans (strain ATCC 43123 / DSM 2839 / NBRC 102507 / CH34) (Ralstonia metallidurans).